The chain runs to 322 residues: Interferon regulatory factor 1 (322 aa).

The segment at residues 5–113 (RMRMRPWLEM…SAVRVYRMLP (109 aa)) is a DNA-binding region (IRF tryptophan pentad repeat). At K78 the chain carries N6-acetyllysine. Residues 92–164 (EEVKDQSRNK…STLPDDHSSY (73 aa)) form a disordered region. Residues 141–157 (GESSPDTFSDGLSSSTL) are compositionally biased toward polar residues. Glycyl lysine isopeptide (Lys-Gly) (interchain with G-Cter in SUMO) cross-links involve residues K276 and K296.

This sequence belongs to the IRF family. As to quaternary structure, monomer. Homodimer. Interacts with EP300. Interacts with MYD88. Interacts with PIAS3. Interacts with SPOP. Post-translationally, phosphorylated by CK2 and this positively regulates its activity. Sumoylation represses the transcriptional activity and displays enhanced resistance to protein degradation. Sumoylated by UBE2I/UBC9 and SUMO1. Inactivates the tumor suppressor activity. Elevated levels in tumor cells. Major site is Lys-276. Sumoylation is enhanced by PIAS3. Desumoylated by SENP1 in tumor cells and appears to compete with ubiquitination on C-terminal sites. In terms of processing, ubiquitinated in a SPOP-depedent manner. Appears to compete with sumoylation on C-terminal sites.

It is found in the nucleus. Its subcellular location is the cytoplasm. Activated by MYD88. Functionally, transcriptional regulator which displays a remarkable functional diversity in the regulation of cellular responses. Regulates transcription of IFN and IFN-inducible genes, host response to viral and bacterial infections, regulation of many genes expressed during hematopoiesis, inflammation, immune responses and cell proliferation and differentiation, regulation of the cell cycle and induction of growth arrest and programmed cell death following DNA damage. Stimulates both innate and acquired immune responses through the activation of specific target genes and can act as a transcriptional activator and repressor regulating target genes by binding to an interferon-stimulated response element (ISRE) in their promoters. Has an essentail role in IFNG-dependent immunity to mycobacteria. Binds to a consensus sequence in gene promoters. Its target genes for transcriptional activation activity include: genes involved in anti-viral response, such as IFN-alpha/beta, RIGI, TNFSF10/TRAIL, ZBP1, OAS1/2, PIAS1/GBP, EIF2AK2/PKR and RSAD2/viperin; antibacterial response, such as GBP2, GBP5 and NOS2/INOS; anti-proliferative response, such as p53/TP53, LOX and CDKN1A; apoptosis, such as BBC3/PUMA, CASP1, CASP7 and CASP8; immune response, such as IL7, IL12A/B and IL15, PTGS2/COX2 and CYBB; DNA damage responses and DNA repair, such as POLQ/POLH; MHC class I expression, such as TAP1, PSMB9/LMP2, PSME1/PA28A, PSME2/PA28B and B2M and MHC class II expression, such as CIITA; metabolic enzymes, such as ACOD1/IRG1. Represses genes involved in anti-proliferative response, such as BIRC5/survivin, CCNB1, CCNE1, CDK1, CDK2 and CDK4 and in immune response, such as FOXP3, IL4, ANXA2 and TLR4. Stimulates p53/TP53-dependent transcription through enhanced recruitment of EP300 leading to increased acetylation of p53/TP53. Plays an important role in immune response directly affecting NK maturation and activity, macrophage production of IL12, Th1 development and maturation of CD8+ T-cells. Also implicated in the differentiation and maturation of dendritic cells and in the suppression of regulatory T (Treg) cells development. Acts as a tumor suppressor and plays a role not only in antagonism of tumor cell growth but also in stimulating an immune response against tumor cells. The chain is Interferon regulatory factor 1 (IRF1) from Sus scrofa (Pig).